Reading from the N-terminus, the 371-residue chain is Queuine tRNA-ribosyltransferase (371 aa).

Residue Asp-89 is the Proton acceptor of the active site. Residues 89–93, Asp-143, Gln-185, and Gly-212 contribute to the substrate site; that span reads DSGGF. An RNA binding region spans residues 243–249; the sequence is GVGKPED. Residue Asp-262 is the Nucleophile of the active site. Residues 267–271 form an RNA binding; important for wobble base 34 recognition region; it reads TRNAR. Residues Cys-300, Cys-302, Cys-305, and His-331 each coordinate Zn(2+).

The protein belongs to the queuine tRNA-ribosyltransferase family. In terms of assembly, homodimer. Within each dimer, one monomer is responsible for RNA recognition and catalysis, while the other monomer binds to the replacement base PreQ1. Zn(2+) serves as cofactor.

It carries out the reaction 7-aminomethyl-7-carbaguanine + guanosine(34) in tRNA = 7-aminomethyl-7-carbaguanosine(34) in tRNA + guanine. It functions in the pathway tRNA modification; tRNA-queuosine biosynthesis. Its function is as follows. Catalyzes the base-exchange of a guanine (G) residue with the queuine precursor 7-aminomethyl-7-deazaguanine (PreQ1) at position 34 (anticodon wobble position) in tRNAs with GU(N) anticodons (tRNA-Asp, -Asn, -His and -Tyr). Catalysis occurs through a double-displacement mechanism. The nucleophile active site attacks the C1' of nucleotide 34 to detach the guanine base from the RNA, forming a covalent enzyme-RNA intermediate. The proton acceptor active site deprotonates the incoming PreQ1, allowing a nucleophilic attack on the C1' of the ribose to form the product. After dissociation, two additional enzymatic reactions on the tRNA convert PreQ1 to queuine (Q), resulting in the hypermodified nucleoside queuosine (7-(((4,5-cis-dihydroxy-2-cyclopenten-1-yl)amino)methyl)-7-deazaguanosine). This chain is Queuine tRNA-ribosyltransferase, found in Thioalkalivibrio sulfidiphilus (strain HL-EbGR7).